A 302-amino-acid polypeptide reads, in one-letter code: Transcription factor bHLH7 (302 aa).

The segment at 124 to 154 is disordered; it reads QPMSQPAPPMPHQQSTIRPRVRARRGQATDP. In terms of domain architecture, bHLH spans 150–199; sequence QATDPHSIAERLRRERIAERIRSLQELVPTVNKTDRAAMIDEIVDYVKFL.

Homodimer. Expressed constitutively in roots, leaves, stems and flowers.

It localises to the nucleus. The polypeptide is Transcription factor bHLH7 (BHLH7) (Arabidopsis thaliana (Mouse-ear cress)).